The primary structure comprises 118 residues: DNA-binding protein inhibitor ID-3-A (118 aa).

The region spanning 32–84 is the bHLH domain; sequence SHKGPGMDEPMGLLYDMNGCYSKLKELVPGIPQGSKLSQVEILQHVIDYIFDL.

In terms of assembly, homodimer. Heterodimer with other HLH proteins. Interacts (via HLH domain) with the bHLH protein hes4/hairy2 (via Orange domain). Interacts with stat3. At gastrula stage, expressed in all three germ layers, but becomes localized to discrete domains of the developing nervous system during neurulation, including the anterior neural plate, cement gland, eye anlagen, otic placode and both cranial and trunk premigratory and early migratory neural crest cells. Also expressed in the most dorsal and ventral portions of the myotome, the developing heart and anterior blood islets, and in the tail fin mesenchyme. Expressed at a low level in limbs, with expression decreasing as limbs develop, but expressed at a high level in blastemas (regenerated limbs), where expression is localized to both the blastermal epidermis and mesenchyme. Widely expressed in adults including the liver and heart.

Its subcellular location is the nucleus. In terms of biological role, transcriptional regulator (lacking a basic DNA binding domain) which negatively regulates the basic helix-loop-helix (bHLH) transcription factors by forming heterodimers and inhibiting their DNA binding and transcriptional activity. Influences cell fate decisions in the embryo by sequestering and blocking the activity of the bHLH transcription factors that control these decisions. Inhibits the binding of myogenic bHLH-containing complexes to E-box DNA, thereby preventing activation of muscle-specific target genes. Also inhibits the activity of neurogenic factor neurod1/neuroD. Plays a role in cell cycle progression and survival of neural crest progenitors; binding to either hes4-B/hairy2b or stat3 blocks the formation of transcription factor complexes and the repressor function of hes4-B/hairy2B, to allow neural crest progenitors to differentiate. May play a role in the regulation of the circadian rhythm. This chain is DNA-binding protein inhibitor ID-3-A (id3-a), found in Xenopus laevis (African clawed frog).